Consider the following 311-residue polypeptide: DNA repair and recombination protein RadA (311 aa).

104 to 111 (GEFGSGKS) is an ATP binding site.

The protein belongs to the eukaryotic RecA-like protein family.

Involved in DNA repair and in homologous recombination. Binds and assemble on single-stranded DNA to form a nucleoprotein filament. Hydrolyzes ATP in a ssDNA-dependent manner and promotes DNA strand exchange between homologous DNA molecules. The chain is DNA repair and recombination protein RadA from Methanobrevibacter smithii (strain ATCC 35061 / DSM 861 / OCM 144 / PS).